The chain runs to 455 residues: Serine--tRNA ligase (455 aa).

L-serine is bound at residue 252 to 254 (TAE). ATP-binding positions include 283–285 (RKE) and Val299. Glu306 contacts L-serine. 370 to 373 (EVVS) is an ATP binding site. Residue Thr406 participates in L-serine binding.

It belongs to the class-II aminoacyl-tRNA synthetase family. Type-1 seryl-tRNA synthetase subfamily. In terms of assembly, homodimer. The tRNA molecule binds across the dimer.

It is found in the cytoplasm. The catalysed reaction is tRNA(Ser) + L-serine + ATP = L-seryl-tRNA(Ser) + AMP + diphosphate + H(+). It carries out the reaction tRNA(Sec) + L-serine + ATP = L-seryl-tRNA(Sec) + AMP + diphosphate + H(+). It participates in aminoacyl-tRNA biosynthesis; selenocysteinyl-tRNA(Sec) biosynthesis; L-seryl-tRNA(Sec) from L-serine and tRNA(Sec): step 1/1. Functionally, catalyzes the attachment of serine to tRNA(Ser). Is also able to aminoacylate tRNA(Sec) with serine, to form the misacylated tRNA L-seryl-tRNA(Sec), which will be further converted into selenocysteinyl-tRNA(Sec). This is Serine--tRNA ligase from Thermococcus kodakarensis (strain ATCC BAA-918 / JCM 12380 / KOD1) (Pyrococcus kodakaraensis (strain KOD1)).